We begin with the raw amino-acid sequence, 198 residues long: Glycerol-3-phosphate acyltransferase (198 aa).

4 helical membrane-spanning segments follow: residues 3-23 (VEWL…AVIV), 81-101 (LFAA…FFQF), 113-133 (VLLG…IGVA), and 153-175 (YVWL…MLLV).

It belongs to the PlsY family. As to quaternary structure, probably interacts with PlsX.

It is found in the cell inner membrane. It catalyses the reaction an acyl phosphate + sn-glycerol 3-phosphate = a 1-acyl-sn-glycero-3-phosphate + phosphate. Its pathway is lipid metabolism; phospholipid metabolism. Functionally, catalyzes the transfer of an acyl group from acyl-phosphate (acyl-PO(4)) to glycerol-3-phosphate (G3P) to form lysophosphatidic acid (LPA). This enzyme utilizes acyl-phosphate as fatty acyl donor, but not acyl-CoA or acyl-ACP. This chain is Glycerol-3-phosphate acyltransferase, found in Methylococcus capsulatus (strain ATCC 33009 / NCIMB 11132 / Bath).